We begin with the raw amino-acid sequence, 320 residues long: tRNA pseudouridine synthase B (320 aa).

The Nucleophile role is filled by aspartate 49.

It belongs to the pseudouridine synthase TruB family. Type 1 subfamily.

It catalyses the reaction uridine(55) in tRNA = pseudouridine(55) in tRNA. Its function is as follows. Responsible for synthesis of pseudouridine from uracil-55 in the psi GC loop of transfer RNAs. The sequence is that of tRNA pseudouridine synthase B from Bartonella tribocorum (strain CIP 105476 / IBS 506).